Reading from the N-terminus, the 274-residue chain is Penicillin-insensitive murein endopeptidase (274 aa).

Positions 1 to 19 (MNKTAIALLALLASSASLA) are cleaved as a signal peptide. Intrachain disulfides connect Cys-44–Cys-265, Cys-187–Cys-235, and Cys-216–Cys-223. Residues His-110, His-113, Asp-120, Asp-147, His-150, and His-211 each coordinate Zn(2+).

The protein belongs to the peptidase M74 family. As to quaternary structure, dimer. Zn(2+) is required as a cofactor.

It localises to the periplasm. Murein endopeptidase that cleaves the D-alanyl-meso-2,6-diamino-pimelyl amide bond that connects peptidoglycan strands. Likely plays a role in the removal of murein from the sacculus. The polypeptide is Penicillin-insensitive murein endopeptidase (Shigella sonnei (strain Ss046)).